The sequence spans 237 residues: MASRHSPQTAAQPDAADKAQALRLTPVSRETETRLDAYLDLLRLWQAKTNLVAPSTLPQLWTRHVADSLQLLALAPTARRWLDFGSGGGFPGIVLACAMAEHDGGHVTLVERNAKKAAFLREALRVTGAPGTVMLADIGDNVDRFPRALDCITARAVAPLHQLIGFAAPLMTEGSKVLFLKGQDVEAELTEATKYWKIEPQLHASLTGGQGWIVELDRIVRHAPSTTNPEAAAHDRH.

A disordered region spans residues 1–25 (MASRHSPQTAAQPDAADKAQALRLT). Positions 7–21 (PQTAAQPDAADKAQA) are enriched in low complexity. S-adenosyl-L-methionine-binding residues include Gly85, Phe90, and Arg155.

It belongs to the methyltransferase superfamily. RNA methyltransferase RsmG family.

The protein resides in the cytoplasm. It catalyses the reaction guanosine(527) in 16S rRNA + S-adenosyl-L-methionine = N(7)-methylguanosine(527) in 16S rRNA + S-adenosyl-L-homocysteine. Functionally, specifically methylates the N7 position of guanine in position 527 of 16S rRNA. The chain is Ribosomal RNA small subunit methyltransferase G from Rhodopseudomonas palustris (strain HaA2).